The following is a 296-amino-acid chain: Heme oxygenase 1 (296 aa).

Over 1–273 (METSQPHNAE…RMQADMLTTS (273 aa)) the chain is Cytoplasmic. The heme b site is built by K21, H28, Y137, and R186. The segment at 231-264 (GHAVQPKAELRTRSVNKSHENSPAAGKESERTSR) is disordered. A compositionally biased stretch (basic and acidic residues) spans 238-250 (AELRTRSVNKSHE). A helical; Anchor for type IV membrane protein membrane pass occupies residues 274–296 (PLVRWLLALGFIATTVAVGLFAM).

Belongs to the heme oxygenase family. As to quaternary structure, homodimer and higher order homooligomer. Oligomerization is crucial for its stability and function in the endoplasmic reticulum. In terms of processing, a soluble form arises by proteolytic removal of the membrane anchor.

The protein localises to the endoplasmic reticulum membrane. It carries out the reaction heme b + 3 reduced [NADPH--hemoprotein reductase] + 3 O2 = biliverdin IXalpha + CO + Fe(2+) + 3 oxidized [NADPH--hemoprotein reductase] + 3 H2O + H(+). With respect to regulation, inhibited by metalloporphyrins in the following order of decreasing potency: tin mesoporphyrin &gt; tin protoporphyrin &gt; zinc protoporphyrin &gt; manganese protoporphyrin &gt; cobalt protoporphyrin. Its function is as follows. Catalyzes the oxidative cleavage of heme at the alpha-methene bridge carbon, released as carbon monoxide (CO), to generate biliverdin IXalpha, while releasing the central heme iron chelate as ferrous iron. Affords protection against programmed cell death and this cytoprotective effect relies on its ability to catabolize free heme and prevent it from sensitizing cells to undergo apoptosis. In terms of biological role, catalyzes the oxidative cleavage of heme at the alpha-methene bridge carbon, released as carbon monoxide (CO), to generate biliverdin IXalpha, while releasing the central heme iron chelate as ferrous iron. The sequence is that of Heme oxygenase 1 (HMOX1) from Gallus gallus (Chicken).